A 357-amino-acid chain; its full sequence is Geranylgeranyl pyrophosphate synthase 11, chloroplastic (357 aa).

A chloroplast-targeting transit peptide spans 1–37 (MATTLSSSSLFIQFRGRRYNSLSSFNNLQKRTVLSLS). Residues Lys103, Arg106, and His135 each contribute to the isopentenyl diphosphate site. Asp142 and Asp148 together coordinate Mg(2+). Arg153 provides a ligand contact to dimethylallyl diphosphate. Arg154 contacts isopentenyl diphosphate. Dimethylallyl diphosphate is bound by residues Lys242, Thr243, Gln280, Lys297, and Lys307.

Belongs to the FPP/GGPP synthase family. In terms of assembly, monomer. Mg(2+) is required as a cofactor.

The protein resides in the plastid. It is found in the chloroplast. The catalysed reaction is isopentenyl diphosphate + dimethylallyl diphosphate = (2E)-geranyl diphosphate + diphosphate. It carries out the reaction isopentenyl diphosphate + (2E)-geranyl diphosphate = (2E,6E)-farnesyl diphosphate + diphosphate. The enzyme catalyses isopentenyl diphosphate + (2E,6E)-farnesyl diphosphate = (2E,6E,10E)-geranylgeranyl diphosphate + diphosphate. The protein operates within isoprenoid biosynthesis; farnesyl diphosphate biosynthesis; farnesyl diphosphate from geranyl diphosphate and isopentenyl diphosphate: step 1/1. It functions in the pathway isoprenoid biosynthesis; geranyl diphosphate biosynthesis; geranyl diphosphate from dimethylallyl diphosphate and isopentenyl diphosphate: step 1/1. Its pathway is isoprenoid biosynthesis; geranylgeranyl diphosphate biosynthesis; geranylgeranyl diphosphate from farnesyl diphosphate and isopentenyl diphosphate: step 1/1. In terms of biological role, catalyzes the trans-addition of the three molecules of IPP onto DMAPP to form geranylgeranyl pyrophosphate. This is Geranylgeranyl pyrophosphate synthase 11, chloroplastic from Arabidopsis thaliana (Mouse-ear cress).